A 1254-amino-acid chain; its full sequence is Structural polyprotein (1254 aa).

The host transcription inhibition stretch occupies residues 43–77 (LQAQQMQQLISAVSALTTKQNVKAPKGQRKQKQQK). The tract at residues 60-112 (TKQNVKAPKGQRKQKQQKPKEKKEKQKKKPTXKKKQQQKPKPQAKKKKPGRRE) is disordered. Residues 70–108 (QRKQKQQKPKEKKEKQKKKPTXKKKQQQKPKPQAKKKKP) carry the Nuclear localization signal motif. The span at 84-110 (KQKKKPTXKKKQQQKPKPQAKKKKPGR) shows a compositional bias: basic residues. Residues 95-123 (QQQKPKPQAKKKKPGRRERMCMKIENDCI) are binding to the viral RNA. The segment at 108-122 (PGRRERMCMKIENDC) is ribosome-binding. Residues Cys122 and Cys137 are joined by a disulfide bond. Positions 122–270 (CIFEVKLDGK…RVTPEGTEEW (149 aa)) constitute a Peptidase S3 domain. Catalysis depends on His148, which acts as the Charge relay system. Positions 153–163 (IDNPDLAKLTY) match the Nuclear export signal motif. The segment at 164–169 (KKSSKY) is interaction with spike glycoprotein E2. Residue Asp170 is the Charge relay system of the active site. Residues 192-202 (PEGHYNWHHGA) form a dimerization of the capsid protein region. The active-site Charge relay system is the Ser222. Positions 228-232 (DNKGR) are dimerization of the capsid protein. The Extracellular segment spans residues 270–694 (WSAALMMCIL…PHEIIQYYYG (425 aa)). The functions as an uncleaved signal peptide for the precursor of protein E3/E2 stretch occupies residues 271–282 (SAALMMCILANT). Disulfide bonds link Cys277/Cys286, Cys291/Cys295, and Cys294/Cys326. Residue Asn281 is glycosylated (N-linked (GlcNAc...) asparagine; by host). A glycan (N-linked (GlcNAc...) asparagine; by host) is linked at Asn328. Intrachain disulfides connect Cys353-Cys459, Cys356-Cys362, Cys425-Cys439, Cys487-Cys599, Cys535-Cys559, and Cys537-Cys554. Interaction with host Mxra8 receptor regions lie at residues 360–363 (YFCY) and 396–398 (HAH). Residues 518 to 521 (TAGN) form an interaction with host Mxra8 receptor region. Asn534 is a glycosylation site (N-linked (GlcNAc...) asparagine; by host). An interaction with host Mxra8 receptor region spans residues 550-556 (TINTCKI). Residue Asn596 is glycosylated (N-linked (GlcNAc...) asparagine; by host). Residues 695–715 (LYPAATIAAVSGASLMALLTL) form a helical membrane-spanning segment. Over 716–756 (AATCCMLATARRKCLTPYALTPGAVVPLTLGLLXCAPRANA) the chain is Cytoplasmic. Residue Cys719 is the site of S-palmitoyl cysteine; by host attachment. The interval 724 to 728 (TARRK) is interaction with the capsid protein. S-palmitoyl cysteine; by host attachment occurs at residues Cys729 and Cys750. Positions 729–749 (CLTPYALTPGAVVPLTLGLLX) are transient transmembrane before p62-6K protein processing. Cys729 and Cys750 are oxidised to a cystine. Over 757–771 (ASFAETMAYLWDENK) the chain is Extracellular. A helical transmembrane segment spans residues 772–792 (TLFWMEXXXXXXALALLACCI). Residue Lys793 is a topological domain, cytoplasmic. Residues 794-814 (SLICCCKPFSFLVLLSLGASA) form a helical membrane-spanning segment. Over 815–1231 (KAYEHTATIP…AMTWVQRMAS (417 aa)) the chain is Extracellular. Cystine bridges form between Cys865–Cys930, Cys878–Cys910, Cys879–Cys912, and Cys884–Cys894. The interval 900 to 917 (VYPFMWGGAYCFCDSENT) is E1 fusion peptide loop. Asn957 is a glycosylation site (N-linked (GlcNAc...) asparagine; by host). Cystine bridges form between Cys1075-Cys1087, Cys1117-Cys1192, Cys1122-Cys1196, and Cys1144-Cys1186. The chain crosses the membrane as a helical span at residues 1232–1252 (GLGGLALIAVVVLVLVTCITM). Cys1249 carries the S-palmitoyl cysteine; by host lipid modification. The S-stearoyl cysteine; by host moiety is linked to residue Cys1249. Over 1253–1254 (RR) the chain is Cytoplasmic.

In terms of assembly, homodimer. Homomultimer. Interacts with host karyopherin KPNA4; this interaction allows the nuclear import of the viral capsid protein. Interacts with spike glycoprotein E2. Interacts with host IRAK1; the interaction leads to inhibition of IRAK1-dependent signaling. The precursor of protein E3/E2 and E1 form a heterodimer shortly after synthesis. As to quaternary structure, the precursor of protein E3/E2 and E1 form a heterodimer shortly after synthesis. Processing of the precursor of protein E3/E2 into E2 and E3 results in a heterodimer of the spike glycoproteins E2 and E1. Spike at virion surface are constituted of a trimer of E2-E1 heterodimers. After target cell attachment and endocytosis, E1 change conformation to form homotrimers. Interacts with 6K protein. In terms of assembly, interacts with spike glycoprotein E1. Processing of the precursor of protein E3/E2 into E2 and E3 results in a heterodimer of the spike glycoproteins E2 and E1. Spike at virion surface are constituted of a trimer of E2-E1 heterodimers. Interacts with 6K protein. Interacts with host MXRA8; this interaction mediates virus entry. In terms of processing, structural polyprotein: Specific enzymatic cleavages in vivo yield mature proteins. Capsid protein is auto-cleaved during polyprotein translation, unmasking a signal peptide at the N-terminus of the precursor of E3/E2. The remaining polyprotein is then targeted to the host endoplasmic reticulum, where host signal peptidase cleaves it into pE2, 6K and E1 proteins. pE2 is further processed to mature E3 and E2 by host furin in trans-Golgi vesicle. Palmitoylated via thioester bonds. These palmitoylations may induce disruption of the C-terminus transmembrane. This would result in the reorientation of E2 C-terminus from lumenal to cytoplasmic side. Post-translationally, N-glycosylated. In terms of processing, palmitoylated via thioester bonds.

It localises to the virion. Its subcellular location is the host cytoplasm. It is found in the host cell membrane. The protein resides in the host nucleus. The protein localises to the virion membrane. It localises to the host Golgi apparatus. Its subcellular location is the host trans-Golgi network. It is found in the host endoplasmic reticulum. The catalysed reaction is Autocatalytic release of the core protein from the N-terminus of the togavirus structural polyprotein by hydrolysis of a -Trp-|-Ser- bond.. Functionally, forms an icosahedral capsid with a T=4 symmetry composed of 240 copies of the capsid protein surrounded by a lipid membrane through which penetrate 80 spikes composed of trimers of E1-E2 heterodimers. The capsid protein binds to the viral RNA genome at a site adjacent to a ribosome binding site for viral genome translation following genome release. Possesses a protease activity that results in its autocatalytic cleavage from the nascent structural protein. Following its self-cleavage, the capsid protein transiently associates with ribosomes, and within several minutes the protein binds to viral RNA and rapidly assembles into icosahedric core particles. The resulting nucleocapsid eventually associates with the cytoplasmic domain of the spike glycoprotein E2 at the cell membrane, leading to budding and formation of mature virions. In case of infection, new virions attach to target cells and after clathrin-mediated endocytosis their membrane fuses with the host endosomal membrane. This leads to the release of the nucleocapsid into the cytoplasm, followed by an uncoating event necessary for the genomic RNA to become accessible. The uncoating might be triggered by the interaction of capsid proteins with ribosomes. Binding of ribosomes would release the genomic RNA since the same region is genomic RNA-binding and ribosome-binding. Specifically inhibits interleukin-1 receptor-associated kinase 1/IRAK1-dependent signaling during viral entry, representing a means by which the alphaviruses may evade innate immune detection and activation prior to viral gene expression. In terms of biological role, provides the signal sequence for the translocation of the precursor of protein E3/E2 to the host endoplasmic reticulum. Furin-cleaved E3 remains associated with spike glycoprotein E1 and mediates pH protection of the latter during the transport via the secretory pathway. After virion release from the host cell, the assembly protein E3 is gradually released in the extracellular space. Plays a role in viral attachment to target host cell, by binding to the cell receptor MXRA8. The host LDLR may also act as a cell receptor for viral entry. Synthesized as a p62 precursor which is processed by furin at the cell membrane just before virion budding, giving rise to E2-E1 heterodimer. The p62-E1 heterodimer is stable, whereas E2-E1 is unstable and dissociate at low pH. p62 is processed at the last step, presumably to avoid E1 fusion activation before its final export to cell surface. E2 C-terminus contains a transitory transmembrane that would be disrupted by palmitoylation, resulting in reorientation of the C-terminal tail from lumenal to cytoplasmic side. This step is critical since E2 C-terminus is involved in budding by interacting with capsid proteins. This release of E2 C-terminus in cytoplasm occurs lately in protein export, and precludes premature assembly of particles at the endoplasmic reticulum membrane. Its function is as follows. Acts as a viroporin that participates in virus glycoprotein processing and transport to the plasma membrane, cell permeabilization and budding of viral particles. The cation channel is permeable to Na(+)&gt;K(+)&gt;Ca(2+) in vitro. Disrupts the calcium homeostasis of the cell, probably at the endoplasmic reticulum level. This leads to cytoplasmic calcium elevation. Because of its lipophilic properties, the 6K protein is postulated to influence the selection of lipids that interact with the transmembrane domains of the glycoproteins, which, in turn, affects the deformability of the bilayer required for the extreme curvature that occurs as budding proceeds. Present in low amount in virions, about 3% compared to viral glycoproteins. Functionally, class II viral fusion protein. Fusion activity is inactive as long as E1 is bound to E2 in mature virion. After virus attachment to target cell via host MXRA8 and endocytosis, acidification of the endosome induce dissociation of E1/E2 heterodimer and concomitant trimerization of the E1 subunits. This E1 trimer is fusion active, and promotes release of viral nucleocapsid in cytoplasm after endosome and viral membrane fusion. Efficient fusion requires the presence of cholesterol and sphingolipid in the target membrane. The protein is Structural polyprotein of Ross river virus (strain NB5092) (RRV).